Here is a 399-residue protein sequence, read N- to C-terminus: tRNA-specific 2-thiouridylase MnmA (399 aa).

ATP is bound by residues 21 to 28 and L47; that span reads AMSGGVDS. The active-site Nucleophile is the C115. A disulfide bridge links C115 with C211. Residue G139 coordinates ATP. The interval 161 to 163 is interaction with tRNA; sequence RDQ. C211 functions as the Cysteine persulfide intermediate in the catalytic mechanism.

This sequence belongs to the MnmA/TRMU family.

It localises to the cytoplasm. The catalysed reaction is S-sulfanyl-L-cysteinyl-[protein] + uridine(34) in tRNA + AH2 + ATP = 2-thiouridine(34) in tRNA + L-cysteinyl-[protein] + A + AMP + diphosphate + H(+). In terms of biological role, catalyzes the 2-thiolation of uridine at the wobble position (U34) of tRNA, leading to the formation of s(2)U34. The protein is tRNA-specific 2-thiouridylase MnmA of Parvibaculum lavamentivorans (strain DS-1 / DSM 13023 / NCIMB 13966).